The following is a 251-amino-acid chain: Hydroxyacylglutathione hydrolase (251 aa).

His53, His55, Asp57, His58, His110, Asp127, and His165 together coordinate Zn(2+).

It belongs to the metallo-beta-lactamase superfamily. Glyoxalase II family. In terms of assembly, monomer. It depends on Zn(2+) as a cofactor.

The enzyme catalyses an S-(2-hydroxyacyl)glutathione + H2O = a 2-hydroxy carboxylate + glutathione + H(+). It participates in secondary metabolite metabolism; methylglyoxal degradation; (R)-lactate from methylglyoxal: step 2/2. In terms of biological role, thiolesterase that catalyzes the hydrolysis of S-D-lactoyl-glutathione to form glutathione and D-lactic acid. This chain is Hydroxyacylglutathione hydrolase, found in Escherichia coli O9:H4 (strain HS).